The sequence spans 252 residues: Nicotinamide/nicotinic acid mononucleotide adenylyltransferase 3 (252 aa).

Positions 14 and 15 each coordinate NAD(+). ATP is bound by residues histidine 22 and lysine 56. Positions 90, 93, 135, and 137 each coordinate NAD(+). An ATP-binding site is contributed by lysine 140. NAD(+) contacts are provided by leucine 147, tryptophan 148, arginine 167, and asparagine 198. 203–206 contributes to the ATP binding site; that stretch reads TYIR.

It belongs to the eukaryotic NMN adenylyltransferase family. Homotetramer. Mg(2+) is required as a cofactor. In terms of tissue distribution, expressed in lung and spleen with lower levels in placenta and kidney.

It is found in the mitochondrion. It carries out the reaction beta-nicotinamide D-ribonucleotide + ATP + H(+) = diphosphate + NAD(+). It catalyses the reaction nicotinate beta-D-ribonucleotide + ATP + H(+) = deamido-NAD(+) + diphosphate. It functions in the pathway cofactor biosynthesis; NAD(+) biosynthesis; NAD(+) from nicotinamide D-ribonucleotide: step 1/1. The protein operates within cofactor biosynthesis; NAD(+) biosynthesis; deamido-NAD(+) from nicotinate D-ribonucleotide: step 1/1. Activity is strongly inhibited by galotannin. Inhibited by P1-(adenosine-5')-P4-(nicotinic-acid-riboside-5')-tetraphosphate (Nap4AD). Its function is as follows. Catalyzes the formation of NAD(+) from nicotinamide mononucleotide (NMN) and ATP. Can also use the deamidated form; nicotinic acid mononucleotide (NaMN) as substrate with the same efficiency. Can use triazofurin monophosphate (TrMP) as substrate. Can also use GTP and ITP as nucleotide donors. Also catalyzes the reverse reaction, i.e. the pyrophosphorolytic cleavage of NAD(+). For the pyrophosphorolytic activity, can use NAD(+), NADH, NaAD, nicotinic acid adenine dinucleotide phosphate (NHD), nicotinamide guanine dinucleotide (NGD) as substrates. Fails to cleave phosphorylated dinucleotides NADP(+), NADPH and NaADP(+). Protects against axonal degeneration following injury. May be involved in the maintenance of axonal integrity. Also functions as a stress-response chaperone protein that prevents toxic aggregation of proteins; this function may be independent of its NAD(+) synthesis activity. The sequence is that of Nicotinamide/nicotinic acid mononucleotide adenylyltransferase 3 from Homo sapiens (Human).